A 444-amino-acid polypeptide reads, in one-letter code: F-box/FBD/LRR-repeat protein At5g53840 (444 aa).

Positions E17–D63 constitute an F-box domain. LRR repeat units lie at residues Y103–S123, V124–R150, V151–F171, V172–K197, S199–R224, N226–N252, N273–D299, I300–V321, C322–L347, V369–E396, and S398–Q423. The FBD domain maps to E356–I408.

The protein is F-box/FBD/LRR-repeat protein At5g53840 of Arabidopsis thaliana (Mouse-ear cress).